Consider the following 103-residue polypeptide: Matrix Gla protein (103 aa).

The N-terminal stretch at 1–19 is a signal peptide; the sequence is MKSLLLLSVLAALAVAALC. E21 bears the 4-carboxyglutamate mark. Phosphoserine is present on residues S22, S25, and S28. In terms of domain architecture, Gla spans 51–97; it reads RAKAQERIRELNKPPYELNREACDDYKLCERYAMVYGYNAAYNRYFR. 4-carboxyglutamate occurs at positions 56, 60, 67, and 71. C73 and C79 form a disulfide bridge.

The protein belongs to the osteocalcin/matrix Gla protein family. In terms of processing, requires vitamin K-dependent gamma-carboxylation for its function.

The protein resides in the secreted. In terms of biological role, associates with the organic matrix of bone and cartilage. Thought to act as an inhibitor of bone formation. The protein is Matrix Gla protein (MGP) of Sus scrofa (Pig).